Consider the following 396-residue polypeptide: Elongation factor Tu (396 aa).

The tr-type G domain occupies 10–205; it reads KPHVNIGTIG…AVDESIPDPV (196 aa). A G1 region spans residues 19 to 26; sequence GHVDHGKT. Position 19-26 (19-26) interacts with GTP; that stretch reads GHVDHGKT. Position 26 (T26) interacts with Mg(2+). The interval 62 to 66 is G2; it reads GITIN. The G3 stretch occupies residues 83-86; sequence DAPG. GTP contacts are provided by residues 83-87 and 138-141; these read DAPGH and NKAD. Residues 138–141 form a G4 region; the sequence is NKAD. The segment at 175–177 is G5; sequence SAL.

It belongs to the TRAFAC class translation factor GTPase superfamily. Classic translation factor GTPase family. EF-Tu/EF-1A subfamily. Monomer.

It localises to the cytoplasm. It catalyses the reaction GTP + H2O = GDP + phosphate + H(+). Its function is as follows. GTP hydrolase that promotes the GTP-dependent binding of aminoacyl-tRNA to the A-site of ribosomes during protein biosynthesis. In Mycolicibacterium vanbaalenii (strain DSM 7251 / JCM 13017 / BCRC 16820 / KCTC 9966 / NRRL B-24157 / PYR-1) (Mycobacterium vanbaalenii), this protein is Elongation factor Tu.